The primary structure comprises 287 residues: Uroplakin-3a (287 aa).

Residues 1–18 (MPPLWALLALGCLRFGSA) form the signal peptide. Residues 19 to 207 (VNLQPQLASV…DTWPGRRSGG (189 aa)) lie on the Lumenal side of the membrane. N74, N139, and N170 each carry an N-linked (GlcNAc...) asparagine glycan. The chain crosses the membrane as a helical span at residues 208–235 (MIVITSILGSLPFFLLVGFAGAIALSLV). The Cytoplasmic portion of the chain corresponds to 236–287 (DMGSSDGETTHDSQITQEAVPKSLGASESSYTSVNRGPPLDRAEVYSSKLQD). The tract at residues 242–287 (GETTHDSQITQEAVPKSLGASESSYTSVNRGPPLDRAEVYSSKLQD) is disordered. The segment covering 261–270 (ASESSYTSVN) has biased composition (polar residues).

The protein belongs to the uroplakin-3 family. Heterodimer with uroplakin-1B (UPK1B). Expressed in ureter.

It is found in the endoplasmic reticulum membrane. Functionally, component of the asymmetric unit membrane (AUM); a highly specialized biomembrane elaborated by terminally differentiated urothelial cells. May play an important role in AUM-cytoskeleton interaction in terminally differentiated urothelial cells. It also contributes to the formation of urothelial glycocalyx which may play an important role in preventing bacterial adherence. The protein is Uroplakin-3a (UPK3A) of Homo sapiens (Human).